A 131-amino-acid chain; its full sequence is Small ribosomal subunit protein uS8 (131 aa).

This sequence belongs to the universal ribosomal protein uS8 family. As to quaternary structure, part of the 30S ribosomal subunit. Contacts proteins S5 and S12.

One of the primary rRNA binding proteins, it binds directly to 16S rRNA central domain where it helps coordinate assembly of the platform of the 30S subunit. In Erythrobacter litoralis (strain HTCC2594), this protein is Small ribosomal subunit protein uS8.